A 476-amino-acid polypeptide reads, in one-letter code: Doublecortin domain-containing protein 2 (476 aa).

2 Doublecortin domains span residues 17–100 (KSVL…LNYL) and 139–221 (CTIF…LPYS). The disordered stretch occupies residues 234-476 (FGQKASSLPP…QQNKDYAAVA (243 aa)). Polar residues predominate over residues 261-272 (STVGSSDNSSPQ). Ser270 is subject to Phosphoserine. Residues 279–289 (KKEDVNSEKLT) show a composition bias toward basic and acidic residues. Polar residues predominate over residues 296–306 (KLKNSQETIPN). The span at 354–366 (EKANKDAEQKEDF) shows a compositional bias: basic and acidic residues. The segment covering 415-426 (ELQQVNNELQLV) has biased composition (low complexity). Residues 446–455 (DPQRPPRPEV) show a composition bias toward basic and acidic residues.

As to quaternary structure, interacts with DVL1, DVL2 and DVL3. As to expression, ubiquitously expressed. In brain, highly expressed in the entorhinal cortex, inferior temporal cortex, medial temporal cortex, hypothalamus, amygdala and hippocampus. Expressed in liver by cholangiocytes, the epithelial cells of the bile ducts (at protein level).

The protein localises to the cell projection. The protein resides in the cilium. It localises to the cytoplasm. It is found in the cytoskeleton. Its subcellular location is the cilium axoneme. The protein localises to the kinocilium. Functionally, protein that plays a role in the inhibition of canonical Wnt signaling pathway. May be involved in neuronal migration during development of the cerebral neocortex. Involved in the control of ciliogenesis and ciliary length. This is Doublecortin domain-containing protein 2 (DCDC2) from Homo sapiens (Human).